We begin with the raw amino-acid sequence, 466 residues long: UDP-N-acetylmuramoylalanine--D-glutamate ligase (466 aa).

Position 124–130 (Gly124–Thr130) interacts with ATP.

This sequence belongs to the MurCDEF family.

It localises to the cytoplasm. The enzyme catalyses UDP-N-acetyl-alpha-D-muramoyl-L-alanine + D-glutamate + ATP = UDP-N-acetyl-alpha-D-muramoyl-L-alanyl-D-glutamate + ADP + phosphate + H(+). It participates in cell wall biogenesis; peptidoglycan biosynthesis. Functionally, cell wall formation. Catalyzes the addition of glutamate to the nucleotide precursor UDP-N-acetylmuramoyl-L-alanine (UMA). In Acetivibrio thermocellus (strain ATCC 27405 / DSM 1237 / JCM 9322 / NBRC 103400 / NCIMB 10682 / NRRL B-4536 / VPI 7372) (Clostridium thermocellum), this protein is UDP-N-acetylmuramoylalanine--D-glutamate ligase.